The sequence spans 340 residues: 4-amino-5-hydroxymethyl-2-methylpyrimidine phosphate synthase THI12 (340 aa).

Residue lysine 62 is modified to N6-(pyridoxal phosphate)lysine. The active site involves histidine 66. 115 to 118 is a pyridoxal 5'-phosphate binding site; it reads GEFG. The CCCFC; essential for catalytic activity, may be the site of iron coordination motif lies at 195-199; sequence CCCFC.

It belongs to the NMT1/THI5 family. Homodimer. Requires Fe cation as cofactor.

The catalysed reaction is N(6)-(pyridoxal phosphate)-L-lysyl-[4-amino-5-hydroxymethyl-2-methylpyrimidine phosphate synthase] + L-histidyl-[4-amino-5-hydroxymethyl-2-methylpyrimidine phosphate synthase] + 2 Fe(3+) + 4 H2O = L-lysyl-[4-amino-5-hydroxymethyl-2-methylpyrimidine phosphate synthase] + (2S)-2-amino-5-hydroxy-4-oxopentanoyl-[4-amino-5-hydroxymethyl-2-methylpyrimidine phosphate synthase] + 4-amino-2-methyl-5-(phosphooxymethyl)pyrimidine + 3-oxopropanoate + 2 Fe(2+) + 2 H(+). The protein operates within cofactor biosynthesis; thiamine diphosphate biosynthesis. Its function is as follows. Responsible for the formation of the pyrimidine heterocycle in the thiamine biosynthesis pathway. Catalyzes the formation of hydroxymethylpyrimidine phosphate (HMP-P) from histidine and pyridoxal phosphate (PLP). The protein uses PLP and the active site histidine to form HMP-P, generating an inactive enzyme. The enzyme can only undergo a single turnover, which suggests it is a suicide enzyme. The chain is 4-amino-5-hydroxymethyl-2-methylpyrimidine phosphate synthase THI12 from Saccharomyces cerevisiae (strain ATCC 204508 / S288c) (Baker's yeast).